The primary structure comprises 688 residues: MSPLDQKNKPRGGADDLPPEIDLEDEALEEIVEPTGPDVAFTAIDWTPHAGDAEGMVGAEVIQTLVKRLPNAPGVYRMMNAAGDVLYVGKARSLKKRVTNYAQGRFHTNRIGRMVRETSTMEFVVTRTEIEALLLEANLIKRLRPRFNVLMRDDKSFPYILLTGDHVSPGIYKHRGARSRKGDYFGPFASAGAVGRTINSLQRAFLLRSCTNSFYENRTRPCLLYQIKRCAGPCTGEISHEGYAELVAEAKDFLSGRSQKVKTEISAAMQQASEDLDFERAAIYRDRLAALSHVQSHQGINPATVDEADVFAIHQEGGQVCIQVFFFRTGQNWGNRAYFPKADPALEAAEVLGSFLAQFYDDKPTPRNILLSRGVEDQELLGEALSTRAGRKVTISVPQRGEKKDLTDNALQNAREALGRRLAETSTQGRLLAGFAETFGLAKPPVRIEVYDNSHIMGTNAVGAMVVAGPEGFVKNQYRKFNIRSTEITPGDDFGMMREVMERRFSRLLKEHGDVAPNDAASAEAGDDIEDDISGSFPAWPDVILIDGGQGQMTAVRKILADLGIEDRVVAIGIAKGQDRDAGRERFFVKGRDSFSLPVRDPVLYFVQRLRDEVHRFAIGSHRARRKKEMVKSPLDEIAGIGPGRKRALLLAFGTAKAVSRAAIEDLRKVDGISEQVAKLVYNHFHES.

Over residues 1 to 14 the composition is skewed to basic and acidic residues; that stretch reads MSPLDQKNKPRGGA. Positions 1–20 are disordered; it reads MSPLDQKNKPRGGADDLPPE. One can recognise a GIY-YIG domain in the interval 71–149; that stretch reads NAPGVYRMMN…IKRLRPRFNV (79 aa). The 36-residue stretch at 259–294 folds into the UVR domain; that stretch reads QKVKTEISAAMQQASEDLDFERAAIYRDRLAALSHV.

This sequence belongs to the UvrC family. Interacts with UvrB in an incision complex.

Its subcellular location is the cytoplasm. In terms of biological role, the UvrABC repair system catalyzes the recognition and processing of DNA lesions. UvrC both incises the 5' and 3' sides of the lesion. The N-terminal half is responsible for the 3' incision and the C-terminal half is responsible for the 5' incision. The polypeptide is UvrABC system protein C (Mesorhizobium japonicum (strain LMG 29417 / CECT 9101 / MAFF 303099) (Mesorhizobium loti (strain MAFF 303099))).